The sequence spans 158 residues: Large ribosomal subunit protein bL17 (158 aa).

The interval A119–E158 is disordered. Positions A126–E158 are enriched in basic and acidic residues.

This sequence belongs to the bacterial ribosomal protein bL17 family. In terms of assembly, part of the 50S ribosomal subunit. Contacts protein L32.

This Anaeromyxobacter sp. (strain K) protein is Large ribosomal subunit protein bL17.